The sequence spans 885 residues: MLSRLFRMHGLFVASHPWEVIVGTVTLTICMMSMNMFTGNDKICGWNYECPKFEEDVLSSDIIILTITRCIAILYIYFQFQNLRQLGSKYILGIAGLFTIFSSFVFSTVVIHFLDKELTGLNEALPFFLLLIDLSRASALAKFALSSNSQDEVRENIARGMAILGPTFTLDALVECLVIGVGTMSGVRQLEIMCCFGCMSVLATYFVFMTFFPACVSLVLELSRESREGRPIWQLSHFARVLEGEENKPNPVTQRVKIIMSLGLVLVHAHSRWIADPSPQNSTADNSKVSLGLDENVSKRIEPSVSLWQFYLSKMISMDIEQVITLTLALLLAVKYIFFEQAETESTLSLKNPITSPVVTQKKVTDDCCRREPTLVRNDQKFHTVEEEARINRERKVEVIKPLVAETDTSSRPTFVVGNSTLDSSLELEMQEPEIQIPSEPRPNEECLQILGNAEKGAKFLSDAEIIQLVNAKHIPAYKLETLMETHERGVSIRRQLLSKKLPEPSSLQYLPYRDYNYSLVMGACCENVIGYMPIPVGVAGPLCLDGKEFQVPMATTEGCLVASTNRGCRAIGLGGGASSRILADGMTPVVRFPRACDSAEVKAWLETPEGFAVIKEAFDSTSRFARLQKLQMSVAGRNLYIRFQSRSGDAMGMNMISKGTEKALSKLHEYFPEMQILAVSGNYCTDKKPAAVNWIEGRGKSVVCEAVIPAKVVREVLKTTTEAMVEVNINKNLVGSAMAGSIGGYNAHAANIVTAIYIACGQDAAQNVGSSNCITLMEASGPTNEDLYISCTMPSIEIGTVGGGTSLLPQQACLQMLGVQGACKDNPGENARQLARIVCGTVMAGELSLMAALAAGHLVRSHMIHNRSKINLQDLQGTCTKKAA.

The Cytoplasmic segment spans residues 1–9 (MLSRLFRMH). A helical membrane pass occupies residues 10–39 (GLFVASHPWEVIVGTVTLTICMMSMNMFTG). At 40–56 (NDKICGWNYECPKFEED) the chain is on the lumenal side. Residues 57–78 (VLSSDIIILTITRCIAILYIYF) traverse the membrane as a helical segment. Positions 61–218 (DIIILTITRC…MTFFPACVSL (158 aa)) constitute an SSD domain. An INSIG-binding motif motif is present at residues 75–78 (YIYF). Residues 79 to 89 (QFQNLRQLGSK) are Cytoplasmic-facing. Residue Lys-89 forms a Glycyl lysine isopeptide (Lys-Gly) (interchain with G-Cter in ubiquitin) linkage. Residues 90-114 (YILGIAGLFTIFSSFVFSTVVIHFL) form a helical membrane-spanning segment. The Lumenal segment spans residues 115–123 (DKELTGLNE). The chain crosses the membrane as a helical span at residues 124 to 149 (ALPFFLLLIDLSRASALAKFALSSNS). Residues 150 to 159 (QDEVRENIAR) are Cytoplasmic-facing. Residues 160-187 (GMAILGPTFTLDALVECLVIGVGTMSGV) form a helical membrane-spanning segment. The Lumenal segment spans residues 188–191 (RQLE). Residues 192-220 (IMCCFGCMSVLATYFVFMTFFPACVSLVL) form a helical membrane-spanning segment. Residues 221-248 (ELSRESREGRPIWQLSHFARVLEGEENK) are Cytoplasmic-facing. A Glycyl lysine isopeptide (Lys-Gly) (interchain with G-Cter in ubiquitin) cross-link involves residue Lys-248. The helical transmembrane segment at 249-275 (PNPVTQRVKIIMSLGLVLVHAHSRWIA) threads the bilayer. Over 276 to 314 (DPSPQNSTADNSKVSLGLDENVSKRIEPSVSLWQFYLSK) the chain is Lumenal. Asn-281 and Asn-296 each carry an N-linked (GlcNAc...) asparagine glycan. The chain crosses the membrane as a helical span at residues 315-339 (MISMDIEQVITLTLALLLAVKYIFF). The Cytoplasmic segment spans residues 340 to 885 (EQAETESTLS…LQGTCTKKAA (546 aa)). Active-site charge relay system residues include Glu-558, Lys-688, and Asp-764. His-863 functions as the Proton donor in the catalytic mechanism. Phosphoserine; by AMPK is present on Ser-869.

This sequence belongs to the HMG-CoA reductase family. In terms of assembly, homotetramer. Homodimer. Interacts (via its SSD) with INSIG1; the interaction, accelerated by sterols, leads to the recruitment of HMGCR to AMFR/gp78 for its ubiquitination by the sterol-mediated ERAD pathway. Interacts with UBIAD1. Undergoes sterol-mediated ubiquitination and ER-associated degradation (ERAD). Accumulation of sterols in the endoplasmic reticulum (ER) membrane, triggers binding of the reductase to the ER membrane protein INSIG1 or INSIG2. The INSIG1 binding leads to the recruitment of the ubiquitin ligase, AMFR/gp78, RNF139 or RNF145, initiating ubiquitination of the reductase. The ubiquitinated reductase is then extracted from the ER membrane and delivered to cytosolic 26S proteosomes by a mechanism probably mediated by the ATPase Valosin-containing protein VCP/p97. The INSIG2-binding leads to the recruitment of the ubiquitin ligase RNF139, initiating ubiquitination of the reductase. Lys-248 is the main site of ubiquitination. Ubiquitination is enhanced by the presence of a geranylgeranylated protein. Post-translationally, N-glycosylated. Deglycosylated by NGLY1 on release from the endoplasmic reticulum (ER) in a sterol-mediated manner. In terms of processing, phosphorylated. Phosphorylation at Ser-869 reduces the catalytic activity. As to expression, high expression found in liver, heart, kidney, bladder and subcutaneous fat. Lower levels in lung, uterus and large intestine. Lowest levels in cerebrum, spleen, spinal cord, stomach, ovary, longissimus muscle, and small intestine.

The protein resides in the endoplasmic reticulum membrane. It is found in the peroxisome membrane. The catalysed reaction is (R)-mevalonate + 2 NADP(+) + CoA = (3S)-3-hydroxy-3-methylglutaryl-CoA + 2 NADPH + 2 H(+). The protein operates within metabolic intermediate biosynthesis; (R)-mevalonate biosynthesis; (R)-mevalonate from acetyl-CoA: step 3/3. Regulated by a negative feedback mechanism through sterols and non-sterol metabolites derived from mevalonate. Phosphorylation at Ser-869 down-regulates the catalytic activity. Its function is as follows. Catalyzes the conversion of (3S)-hydroxy-3-methylglutaryl-CoA (HMG-CoA) to mevalonic acid, the rate-limiting step in the synthesis of cholesterol and other isoprenoids, thus plays a critical role in cellular cholesterol homeostasis. This Sus scrofa (Pig) protein is 3-hydroxy-3-methylglutaryl-coenzyme A reductase (HMGCR).